The sequence spans 583 residues: ATP-dependent lipid A-core flippase (583 aa).

Transmembrane regions (helical) follow at residues 32-52, 71-91, 115-135, 160-180, 259-279, and 286-306; these read VAFL…TGFL, LHLL…AGFI, LMSL…TSKL, ILGM…IFAV, SMVV…YAVG, and FAAF…LTSL. An ABC transmembrane type-1 domain is found at 34–312; it reads FLISIIALVT…LTSLNEELQV (279 aa). Residues 344–580 enclose the ABC transporter domain; sequence IVFENVTLQY…DGHYAKLYRK (237 aa). An ATP-binding site is contributed by 378–385; that stretch reads GRSGGGKT.

It belongs to the ABC transporter superfamily. Lipid exporter (TC 3.A.1.106) family. In terms of assembly, homodimer.

The protein localises to the cell inner membrane. The catalysed reaction is ATP + H2O + lipid A-core oligosaccharideSide 1 = ADP + phosphate + lipid A-core oligosaccharideSide 2.. Involved in lipopolysaccharide (LPS) biosynthesis. Translocates lipid A-core from the inner to the outer leaflet of the inner membrane. Transmembrane domains (TMD) form a pore in the inner membrane and the ATP-binding domain (NBD) is responsible for energy generation. This chain is ATP-dependent lipid A-core flippase, found in Methylobacillus flagellatus (strain ATCC 51484 / DSM 6875 / VKM B-1610 / KT).